The primary structure comprises 383 residues: Succinyl-diaminopimelate desuccinylase (383 aa).

His73 contacts Zn(2+). Asp75 is an active-site residue. Residue Asp107 participates in Zn(2+) binding. Glu141 serves as the catalytic Proton acceptor. 3 residues coordinate Zn(2+): Glu142, Glu170, and His356.

It belongs to the peptidase M20A family. DapE subfamily. In terms of assembly, homodimer. Requires Zn(2+) as cofactor. The cofactor is Co(2+).

The catalysed reaction is N-succinyl-(2S,6S)-2,6-diaminopimelate + H2O = (2S,6S)-2,6-diaminopimelate + succinate. It participates in amino-acid biosynthesis; L-lysine biosynthesis via DAP pathway; LL-2,6-diaminopimelate from (S)-tetrahydrodipicolinate (succinylase route): step 3/3. Functionally, catalyzes the hydrolysis of N-succinyl-L,L-diaminopimelic acid (SDAP), forming succinate and LL-2,6-diaminopimelate (DAP), an intermediate involved in the bacterial biosynthesis of lysine and meso-diaminopimelic acid, an essential component of bacterial cell walls. In Pseudomonas aeruginosa (strain UCBPP-PA14), this protein is Succinyl-diaminopimelate desuccinylase.